A 437-amino-acid polypeptide reads, in one-letter code: RNA-binding motif, single-stranded-interacting protein 3 (437 aa).

The disordered stretch occupies residues 28–57; sequence YAPAPHPMAPPSPSTNSSSNNSSNNSSGEQ. The segment covering 31–40 has biased composition (pro residues); it reads APHPMAPPSP. Positions 41-54 are enriched in low complexity; the sequence is STNSSSNNSSNNSS. RRM domains follow at residues 61-134 and 140-225; these read TNLY…MAKQ and TNLY…FADG. The segment covering 399–422 has biased composition (polar residues); that stretch reads TSPQTVAPSSQDTSGQQQQIAVDT. The segment at 399 to 437 is disordered; the sequence is TSPQTVAPSSQDTSGQQQQIAVDTSNEHAPAYSYQQSKP.

In terms of tissue distribution, expressed in fetal brain, fetal lung, fetal liver, heart, brain, placenta, lung, liver, muscle, kidney and pancreas.

It localises to the cytoplasm. Functionally, binds poly(A) and poly(U) oligoribonucleotides. In Homo sapiens (Human), this protein is RNA-binding motif, single-stranded-interacting protein 3 (RBMS3).